The chain runs to 644 residues: Exoribonuclease 2 (644 aa).

Residues 189 to 516 (RQDLTALNFV…NHRLLKAVIK (328 aa)) enclose the RNB domain. Positions 561-643 (DTRFAAEIID…DTRSIIARPA (83 aa)) constitute an S1 motif domain.

The protein belongs to the RNR ribonuclease family. RNase II subfamily.

It is found in the cytoplasm. The enzyme catalyses Exonucleolytic cleavage in the 3'- to 5'-direction to yield nucleoside 5'-phosphates.. In terms of biological role, involved in mRNA degradation. Hydrolyzes single-stranded polyribonucleotides processively in the 3' to 5' direction. This chain is Exoribonuclease 2, found in Salmonella arizonae (strain ATCC BAA-731 / CDC346-86 / RSK2980).